The primary structure comprises 121 residues: Large ribosomal subunit protein bL20 (121 aa).

It belongs to the bacterial ribosomal protein bL20 family.

Its function is as follows. Binds directly to 23S ribosomal RNA and is necessary for the in vitro assembly process of the 50S ribosomal subunit. It is not involved in the protein synthesizing functions of that subunit. This chain is Large ribosomal subunit protein bL20, found in Moorella thermoacetica (strain ATCC 39073 / JCM 9320).